The sequence spans 632 residues: Tail spike protein (632 aa).

One can recognise a Peptidase S74 domain in the interval 505 to 630 (SDARCKTEPL…KRMQEALAAL (126 aa)).

As to quaternary structure, homotrimer. Post-translationally, proteolytic cleavage and release of the chaperone in the host cytosol stabilizes the folded protein. The cleavage gives rise to the mature tail spike protein but is not essential for catalytic activity.

It localises to the virion. In terms of biological role, functions as a receptor binding protein (RBP) and probably mediates the attachment to the host capsular exopolysaccharides. Displays a depolymerase activity that specifically degrades the K5-type polysaccharides of Escherichia coli capsule. The C-terminal chaperone protein mediates homotrimerization and proper folding of the catalytic trimer. The sequence is that of Tail spike protein (kflA) from Escherichia virus K5 (Bacteriophage K5).